Here is a 306-residue protein sequence, read N- to C-terminus: Beta-lactamase (306 aa).

Positions M1 to A34 form a signal peptide, tat-type signal. S82 functions as the Acyl-ester intermediate in the catalytic mechanism. K250 to G252 is a binding site for substrate.

The protein belongs to the class-A beta-lactamase family. Predicted to be exported by the Tat system. The position of the signal peptide cleavage has not been experimentally proven.

It carries out the reaction a beta-lactam + H2O = a substituted beta-amino acid. In Streptomyces fradiae (Streptomyces roseoflavus), this protein is Beta-lactamase (blaF).